Reading from the N-terminus, the 525-residue chain is Serine/threonine-protein kinase YPK3 (525 aa).

Residues Ser90 and Ser105 each carry the phosphoserine modification. Position 107 is a phosphothreonine (Thr107). In terms of domain architecture, Protein kinase spans 128–424; that stretch reads FKPVRVLGQG…KTGANNKPTK (297 aa). ATP-binding positions include 134–142 and Lys157; that span reads LGQGAYGKV. The interval 170–193 is disordered; that stretch reads ATDSKREDEDKNDGNNNDNDDGLS. Basic and acidic residues predominate over residues 172–182; it reads DSKREDEDKND. The active-site Proton acceptor is Asp277. Phosphoserine; by PKH1 or PKH2 is present on Ser321. Residues 445–524 form the AGC-kinase C-terminal domain; sequence RKIDWKLLES…KASGSYLEKY (80 aa). Thr490 is subject to Phosphothreonine; by TORC1. The residue at position 513 (Ser513) is a Phosphoserine; by TORC1.

This sequence belongs to the protein kinase superfamily. AGC Ser/Thr protein kinase family. S6 kinase subfamily. Phosphorylated by PKA in a TORC1-dependent manner. Phosphorylation at PKA consensus sites RRxS/T decreases upon rapamycin treatment.

It localises to the cytoplasm. The catalysed reaction is L-seryl-[protein] + ATP = O-phospho-L-seryl-[protein] + ADP + H(+). It catalyses the reaction L-threonyl-[protein] + ATP = O-phospho-L-threonyl-[protein] + ADP + H(+). Its function is as follows. AGC kinase which plays a role in TOR complex 1 (TORC1) signaling pathway which mediates temporal control of cell growth in response to nutrients. Required for phosphorylation of ribosomal protein S6 (RPS6A/RPS6B) at 'Ser-232' and 'Ser-233'. In Saccharomyces cerevisiae (strain ATCC 204508 / S288c) (Baker's yeast), this protein is Serine/threonine-protein kinase YPK3.